A 93-amino-acid chain; its full sequence is Small ribosomal subunit protein bS16 (93 aa).

The protein belongs to the bacterial ribosomal protein bS16 family.

The sequence is that of Small ribosomal subunit protein bS16 from Dictyoglomus turgidum (strain DSM 6724 / Z-1310).